We begin with the raw amino-acid sequence, 940 residues long: Isoleucine--tRNA ligase (940 aa).

Positions 58–68 (PYANGSIHIGH) match the 'HIGH' region motif. Glu-564 is an L-isoleucyl-5'-AMP binding site. The 'KMSKS' region signature appears at 605 to 609 (KMSKS). An ATP-binding site is contributed by Lys-608. Zn(2+) contacts are provided by Cys-903, Cys-906, Cys-923, and Cys-926.

Belongs to the class-I aminoacyl-tRNA synthetase family. IleS type 1 subfamily. As to quaternary structure, monomer. Zn(2+) serves as cofactor.

Its subcellular location is the cytoplasm. The enzyme catalyses tRNA(Ile) + L-isoleucine + ATP = L-isoleucyl-tRNA(Ile) + AMP + diphosphate. Functionally, catalyzes the attachment of isoleucine to tRNA(Ile). As IleRS can inadvertently accommodate and process structurally similar amino acids such as valine, to avoid such errors it has two additional distinct tRNA(Ile)-dependent editing activities. One activity is designated as 'pretransfer' editing and involves the hydrolysis of activated Val-AMP. The other activity is designated 'posttransfer' editing and involves deacylation of mischarged Val-tRNA(Ile). In Shewanella woodyi (strain ATCC 51908 / MS32), this protein is Isoleucine--tRNA ligase.